The chain runs to 734 residues: Myb-like protein J (734 aa).

Disordered regions lie at residues 1-35 (MPNN…FKSN), 128-196 (QKDQ…PTMM), and 221-378 (SPIS…LKQG). A compositionally biased stretch (basic and acidic residues) spans 131 to 142 (QQQKEQQKEQQK). Residues 164–173 (TTTTTTTTTT) show a composition bias toward low complexity. Residues 174–196 (AVEQQGAEQQDTNLNSTSSPTMM) are compositionally biased toward polar residues. Residues 221-230 (SPISSSLNNS) show a composition bias toward low complexity. Positions 231–257 (QDNTKPVSPDNIENTSNPMDTSSSNGK) are enriched in polar residues. Low complexity predominate over residues 258-372 (TPTITPIVTP…GGKTNPTGKK (115 aa)). An HTH myb-type domain is found at 371-426 (KKTSLKQGWTKEEHIRFLNGIQIHGKGAWKEIAQFVGTRTPTQIQSHAQKYYLRQK). Residues 399 to 422 (WKEIAQFVGTRTPTQIQSHAQKYY) constitute a DNA-binding region (H-T-H motif). The segment covering 445–454 (DDNLNNSNKN) has biased composition (low complexity). Residues 445–623 (DDNLNNSNKN…GNILRHQNSH (179 aa)) are disordered. Basic and acidic residues predominate over residues 455 to 468 (NVDKNKQDDKEKKT). The segment covering 469–478 (QKTKKTKSKS) has biased composition (basic residues). Low complexity-rich tracts occupy residues 489-543 (QQQQ…SSQT) and 574-615 (NNNN…NEGN).

It is found in the nucleus. This chain is Myb-like protein J (mybJ), found in Dictyostelium discoideum (Social amoeba).